We begin with the raw amino-acid sequence, 63 residues long: Small, acid-soluble spore protein H 2 (63 aa).

It belongs to the SspH family.

It localises to the spore core. In Clostridium botulinum (strain ATCC 19397 / Type A), this protein is Small, acid-soluble spore protein H 2.